We begin with the raw amino-acid sequence, 674 residues long: Zyxin (674 aa).

The disordered stretch occupies residues 35-447; sequence PPKPKVNPFR…PHQDQTSGSQ (413 aa). A compositionally biased stretch (pro residues) spans 86–109; it reads LPPPPPNEEPMSPPGSSFPPPPPS. A compositionally biased stretch (low complexity) spans 110–120; sequence FGDDGPGSPLG. Pro residues-rich tracts occupy residues 121 to 148, 162 to 180, 187 to 209, 222 to 240, and 254 to 266; these read LFPPPPPPEFSEPFPPPIEESFPSPPPL, ASVPPPPPPLPSPPEPAPP, KPAPVLPKPPPPSAFPKPEPPQS, KPSPPSAVAPKPVAPPPVA, and AAPPTHTPAPPAP. Composition is skewed to basic and acidic residues over residues 328–341 and 358–387; these read AKHEAPPPAAKHEA and QRDKPRVLEKPRANVRDLVPEPPVETRGER. LIM zinc-binding domains follow at residues 481–542, 543–600, and 601–671; these read ELCG…TLEC, CAVC…RRYA, and PRCT…RARA.

It belongs to the zyxin/ajuba family. Interacts (via LIM2 domain) with hesx1/anf1.

It is found in the cytoplasm. It localises to the cytoskeleton. The protein localises to the cell junction. The protein resides in the focal adhesion. Functionally, adhesion plaque protein. May be a component of a signal transduction pathway that mediates adhesion-stimulated changes in gene expression. Suppresses the transcription-repressing activity of hesx1/anf1. The polypeptide is Zyxin (Xenopus tropicalis (Western clawed frog)).